A 1358-amino-acid polypeptide reads, in one-letter code: DNA-directed RNA polymerase subunit beta (1358 aa).

It belongs to the RNA polymerase beta chain family. In terms of assembly, the RNAP catalytic core consists of 2 alpha, 1 beta, 1 beta' and 1 omega subunit. When a sigma factor is associated with the core the holoenzyme is formed, which can initiate transcription.

It carries out the reaction RNA(n) + a ribonucleoside 5'-triphosphate = RNA(n+1) + diphosphate. Its function is as follows. DNA-dependent RNA polymerase catalyzes the transcription of DNA into RNA using the four ribonucleoside triphosphates as substrates. This is DNA-directed RNA polymerase subunit beta from Francisella tularensis subsp. novicida (strain U112).